The primary structure comprises 141 residues: ATP synthase epsilon chain (141 aa).

It belongs to the ATPase epsilon chain family. In terms of assembly, F-type ATPases have 2 components, CF(1) - the catalytic core - and CF(0) - the membrane proton channel. CF(1) has five subunits: alpha(3), beta(3), gamma(1), delta(1), epsilon(1). CF(0) has three main subunits: a, b and c.

The protein resides in the cell membrane. Its function is as follows. Produces ATP from ADP in the presence of a proton gradient across the membrane. This chain is ATP synthase epsilon chain, found in Natranaerobius thermophilus (strain ATCC BAA-1301 / DSM 18059 / JW/NM-WN-LF).